Reading from the N-terminus, the 64-residue chain is Sulfur carrier protein ThiS (64 aa).

G64 is subject to 1-thioglycine; alternate. G64 carries the glycyl adenylate; alternate modification. Residue G64 forms a Glycyl cysteine thioester (Gly-Cys) (interchain with C-192 in TtuC); alternate linkage.

Belongs to the sulfur carrier protein ThiS family. In terms of processing, C-terminal thiocarboxylation occurs in 2 steps, it is first acyl-adenylated (-COAMP) by TtuC, then thiocarboxylated (-COSH) by the cysteine desulfurases IscS or SufS.

Its pathway is cofactor biosynthesis; thiamine diphosphate biosynthesis. Its function is as follows. Is the sulfur donor in the synthesis of the thiazole phosphate moiety of thiamine phosphate. The chain is Sulfur carrier protein ThiS from Thermus thermophilus (strain ATCC BAA-163 / DSM 7039 / HB27).